Here is a 404-residue protein sequence, read N- to C-terminus: Dual-specificity RNA methyltransferase RlmN (404 aa).

Glu119 acts as the Proton acceptor in catalysis. The region spanning 126–358 (VGRAGALCVS…NKAGYSSPIR (233 aa)) is the Radical SAM core domain. A disulfide bridge links Cys133 with Cys369. [4Fe-4S] cluster is bound by residues Cys140, Cys144, and Cys147. Residues 195–196 (GE), Ser227, 249–251 (SLH), and Asn326 each bind S-adenosyl-L-methionine. The S-methylcysteine intermediate role is filled by Cys369.

This sequence belongs to the radical SAM superfamily. RlmN family. [4Fe-4S] cluster serves as cofactor.

Its subcellular location is the cytoplasm. It carries out the reaction adenosine(2503) in 23S rRNA + 2 reduced [2Fe-2S]-[ferredoxin] + 2 S-adenosyl-L-methionine = 2-methyladenosine(2503) in 23S rRNA + 5'-deoxyadenosine + L-methionine + 2 oxidized [2Fe-2S]-[ferredoxin] + S-adenosyl-L-homocysteine. The catalysed reaction is adenosine(37) in tRNA + 2 reduced [2Fe-2S]-[ferredoxin] + 2 S-adenosyl-L-methionine = 2-methyladenosine(37) in tRNA + 5'-deoxyadenosine + L-methionine + 2 oxidized [2Fe-2S]-[ferredoxin] + S-adenosyl-L-homocysteine. In terms of biological role, specifically methylates position 2 of adenine 2503 in 23S rRNA and position 2 of adenine 37 in tRNAs. m2A2503 modification seems to play a crucial role in the proofreading step occurring at the peptidyl transferase center and thus would serve to optimize ribosomal fidelity. The polypeptide is Dual-specificity RNA methyltransferase RlmN (Caulobacter sp. (strain K31)).